The chain runs to 446 residues: Tripartite motif-containing protein 43B (446 aa).

The segment at 15–56 (CVICLNYLVDPVTICCGHSFCRPCLCLSWEEAQSPANCPACR) adopts an RING-type zinc-finger fold. The B box-type zinc-finger motif lies at 88 to 129 (SEKQICGTHRQTKKMFCDMDKSLLCLLCSNSQEHGAHKHYPI). Zn(2+) contacts are provided by Cys93, His96, Cys115, and His121. Coiled-coil stretches lie at residues 129–158 (IEEA…QRNL) and 190–220 (LHKE…VKMD). The region spanning 269–446 (ELTAGPITGL…VRPFFYTGHR (178 aa)) is the B30.2/SPRY domain.

The protein belongs to the TRIM/RBCC family.

This Homo sapiens (Human) protein is Tripartite motif-containing protein 43B (TRIM43B).